Here is a 480-residue protein sequence, read N- to C-terminus: Immune evasion protein OPG047 (480 aa).

The BTB domain maps to 10–90 (CKNILALSMT…SYTGKVYIDS (81 aa)). Residues 125-223 (CVECYMMGIE…NYLSPRGINN (99 aa)) enclose the BACK domain. 5 Kelch repeats span residues 273 to 319 (VVYL…PANN), 320 to 363 (KLYV…SINN), 365 to 408 (IYVM…VFGR), 410 to 447 (LFLVGRNAEFYCESSNTWTLIDDPIYPRDNPELIIVDN), and 448 to 480 (KLLLIGGFYRGSYIDTIEVYNHHTYSWNIWDGK).

The protein belongs to the orthopoxvirus OPG047 family.

Functionally, might have a role in the suppression of host immune response. This Vaccinia virus (strain Copenhagen) (VACV) protein is Immune evasion protein OPG047 (OPG047).